The sequence spans 527 residues: Formate--tetrahydrofolate ligase (527 aa).

Residue 53–60 coordinates ATP; that stretch reads TSSGEGKT.

This sequence belongs to the formate--tetrahydrofolate ligase family.

It catalyses the reaction (6S)-5,6,7,8-tetrahydrofolate + formate + ATP = (6R)-10-formyltetrahydrofolate + ADP + phosphate. Its pathway is one-carbon metabolism; tetrahydrofolate interconversion. This chain is Formate--tetrahydrofolate ligase, found in Acholeplasma laidlawii (strain PG-8A).